A 207-amino-acid polypeptide reads, in one-letter code: Small ribosomal subunit protein uS4c (207 aa).

Positions 92–153 (MRLDNILFRL…PKTYQSILSK (62 aa)) constitute an S4 RNA-binding domain.

It belongs to the universal ribosomal protein uS4 family. As to quaternary structure, part of the 30S ribosomal subunit. Contacts protein S5. The interaction surface between S4 and S5 is involved in control of translational fidelity.

It localises to the plastid. The protein localises to the chloroplast. In terms of biological role, one of the primary rRNA binding proteins, it binds directly to 16S rRNA where it nucleates assembly of the body of the 30S subunit. With S5 and S12 plays an important role in translational accuracy. The sequence is that of Small ribosomal subunit protein uS4c (rps4) from Equisetum hyemale (Dutch rush).